Consider the following 328-residue polypeptide: Malate dehydrogenase (328 aa).

An NAD(+)-binding site is contributed by 12–18; it reads GAAGQIA. Residues R93 and R99 each contribute to the substrate site. NAD(+) contacts are provided by residues N106, Q113, and 130 to 132; that span reads VGN. The substrate site is built by N132 and R163. The Proton acceptor role is filled by H188.

This sequence belongs to the LDH/MDH superfamily. MDH type 2 family.

The enzyme catalyses (S)-malate + NAD(+) = oxaloacetate + NADH + H(+). Functionally, catalyzes the reversible oxidation of malate to oxaloacetate. The chain is Malate dehydrogenase from Burkholderia lata (strain ATCC 17760 / DSM 23089 / LMG 22485 / NCIMB 9086 / R18194 / 383).